The chain runs to 196 residues: ATP-dependent Clp protease proteolytic subunit (196 aa).

Residue S98 is the Nucleophile of the active site. H123 is a catalytic residue.

The protein belongs to the peptidase S14 family. In terms of assembly, fourteen ClpP subunits assemble into 2 heptameric rings which stack back to back to give a disk-like structure with a central cavity, resembling the structure of eukaryotic proteasomes.

It localises to the cytoplasm. It carries out the reaction Hydrolysis of proteins to small peptides in the presence of ATP and magnesium. alpha-casein is the usual test substrate. In the absence of ATP, only oligopeptides shorter than five residues are hydrolyzed (such as succinyl-Leu-Tyr-|-NHMec, and Leu-Tyr-Leu-|-Tyr-Trp, in which cleavage of the -Tyr-|-Leu- and -Tyr-|-Trp bonds also occurs).. In terms of biological role, cleaves peptides in various proteins in a process that requires ATP hydrolysis. Has a chymotrypsin-like activity. Plays a major role in the degradation of misfolded proteins. ClpXP is involved in the complete degradation of the Site-2 clipped anti-sigma-W factor RsiW. This results in the release of SigW and the transcription activation of the genes under the control of the sigma-W factor. This is ATP-dependent Clp protease proteolytic subunit from Geobacillus kaustophilus (strain HTA426).